The primary structure comprises 155 residues: Probable methanogenesis regulatory protein FilR2 (155 aa).

Residues 18–142 (IILLVEDNNA…DLKRTVEEIK (125 aa)) enclose the Response regulatory domain. Asp-75 carries the 4-aspartylphosphate modification.

Post-translationally, phosphorylated by FilI.

Functionally, member of the two-component regulatory system FilI/FilRs, which is involved in the regulation of methanogenesis. The protein is Probable methanogenesis regulatory protein FilR2 of Methanothrix harundinacea (strain 6Ac) (Methanosaeta harundinacea).